Consider the following 351-residue polypeptide: Heat-inducible transcription repressor HrcA (351 aa).

Belongs to the HrcA family.

Negative regulator of class I heat shock genes (grpE-dnaK-dnaJ and groELS operons). Prevents heat-shock induction of these operons. In Mycoplasma pneumoniae (strain ATCC 29342 / M129 / Subtype 1) (Mycoplasmoides pneumoniae), this protein is Heat-inducible transcription repressor HrcA.